Here is an 897-residue protein sequence, read N- to C-terminus: Echinoderm microtubule-associated protein-like 3 (897 aa).

N-acetylmethionine is present on M1. The stretch at 16-43 (LQTLSQRLRVQEEEMELVKAALAEALRL) forms a coiled coil. A compositionally biased stretch (polar residues) spans 51-68 (TTLQGSGISAPTRNSSIT). Residues 51–210 (TTLQGSGISA…GGPGSRRSNY (160 aa)) form a disordered region. Low complexity-rich tracts occupy residues 96-108 (PSSG…NGPP), 118-132 (SGTQ…SSGA), and 155-164 (RNSSSSSSPS). Residues 175–190 (AASSANLLLRSGSTES) are compositionally biased toward polar residues. Phosphoserine is present on residues S177, S199, and S205. WD repeat units lie at residues 235 to 287 (RSLE…LYRP), 296 to 345 (GGGQ…IWDS), 351 to 393 (LQEI…VWDC), 399 to 435 (LAEI…FWNW), 449 to 488 (RKQG…TWGR), 505 to 544 (YTIV…QWGP), 550 to 585 (QEAE…LRGD), 590 to 627 (FSPV…LWDG), 630 to 668 (HALA…VLDT), 675 to 710 (SDVT…IYSV), 717 to 756 (SSRF…YWDV), 766 to 824 (RYES…LFQY), and 831 to 870 (APSR…QWRV). Residues 876 to 897 (SGPAPATPSRTPSLSPASSLDV) form a disordered region. T882 carries the post-translational modification Phosphothreonine; by CDK1. Polar residues predominate over residues 883-897 (PSRTPSLSPASSLDV). The residue at position 884 (S884) is a Phosphoserine.

Belongs to the WD repeat EMAP family. Homotrimer; self-association is mediated by the N-terminal coiled coil. Interacts with EML2 but not with EML1. Interacts (phosphorylated at Thr-882) with TUBG1, HAUS1, HAUS2, HAUS3, HAUS4, HAUS5, HAUS6, HAUS7 and HAUS8. In terms of processing, phosphorylation at Thr-882 during mitosis is required for interaction with TUBG1, HAUS1, HAUS2, HAUS3, HAUS4, HAUS5, HAUS6, HAUS7 and HAUS8 and their recruitment to spindle microtubules.

It localises to the cytoplasm. The protein resides in the cytoskeleton. Its subcellular location is the nucleus. The protein localises to the midbody. It is found in the spindle. Functionally, regulates mitotic spindle assembly, microtubule (MT)-kinetochore attachment and chromosome separation via recruitment of HAUS augmin-like complex and TUBG1 to the existing MTs and promoting MT-based MT nucleation. Required for proper alignnment of chromosomes during metaphase. The sequence is that of Echinoderm microtubule-associated protein-like 3 (Eml3) from Mus musculus (Mouse).